The sequence spans 348 residues: MSLMVVSMACVGFFLLQGAWPHEGVHRKPSLLAHPGRLVKSEETVILQCWSDVRFEHFLLHREGKFKDTLHLIGEHHDGVSKANFSIGPMMQDLAGTYRCYGSVTHSPYQLSAPSDPLDIVITGLYEKPSLSAQPGPTVLAGESVTLSCSSRSSYDMYHLSREGEAHECRFSAGPKVNGTFQADFPLGPATHGGTYRCFGSFRDSPYEWSNSSDPLLVSVIGNPSNSWPSPTEPSSKTGNPRHLHILIGTSVVIILFILLFFLLHRWCSNKKNAAVMDQESAGNRTANSEDSDEQDPQEVTYTQLNHCVFTQRKITRPSQRPKTPPTDIIVYAELPNAESRSKVVSCP.

The first 21 residues, 1-21, serve as a signal peptide directing secretion; it reads MSLMVVSMACVGFFLLQGAWP. At 22-245 the chain is on the extracellular side; it reads HEGVHRKPSL…SKTGNPRHLH (224 aa). 2 consecutive Ig-like C2-type domains span residues 42–107 and 142–205; these read EETV…VTHS and GESV…FRDS. 2 disulfides stabilise this stretch: C49/C100 and C149/C198. N-linked (GlcNAc...) asparagine glycans are attached at residues N84, N178, and N211. A helical membrane pass occupies residues 246 to 264; that stretch reads ILIGTSVVIILFILLFFLL. The Cytoplasmic segment spans residues 265-348; sequence HRWCSNKKNA…ESRSKVVSCP (84 aa).

The protein belongs to the immunoglobulin superfamily.

Its subcellular location is the cell membrane. Its function is as follows. Receptor on natural killer (NK) cells for HLA-Cw1, 3, 7, and 8 allotypes. Inhibits the activity of NK cells thus preventing cell lysis. The polypeptide is Killer cell immunoglobulin-like receptor 2DL2 (Homo sapiens (Human)).